A 501-amino-acid chain; its full sequence is Raftlin-2 (501 aa).

Disordered stretches follow at residues 1–20 (MGCG…GKIF) and 196–239 (SWNE…RKGE). A lipid anchor (N-myristoyl glycine) is attached at Gly2. The S-palmitoyl cysteine moiety is linked to residue Cys3. Over residues 220 to 233 (GQYQMEQNGSPTSS) the composition is skewed to polar residues. Phosphoserine is present on Ser405. Residues 407 to 449 (AQTPDKKASRHIKGEDKNKATSRSIGLDTTSSQPAESRHLPEE) form a disordered region. Thr409 carries the phosphothreonine modification. Over residues 410–425 (PDKKASRHIKGEDKNK) the composition is skewed to basic and acidic residues. The span at 427 to 441 (TSRSIGLDTTSSQPA) shows a compositional bias: polar residues. Position 430 is a phosphoserine (Ser430).

It belongs to the raftlin family.

The protein localises to the cell membrane. Upon bacterial lipopolysaccharide stimulation, mediates clathrin-dependent internalization of TLR4 in dendritic cells, resulting in activation of TICAM1-mediated signaling and subsequent IFNB1 production. May regulate B-cell antigen receptor-mediated signaling. The chain is Raftlin-2 (RFTN2) from Homo sapiens (Human).